A 116-amino-acid chain; its full sequence is uncharacterized protein (116 aa).

A CHY-type zinc finger spans residues 1–72 (MCKHVLNAQV…SDEYCPNCDN (72 aa)). 12 residues coordinate Zn(2+): Cys2, His4, Cys16, Cys17, Cys23, Cys26, His27, His33, Cys45, Cys48, Cys67, and Cys70.

Its subcellular location is the cytoplasm. This is an uncharacterized protein from Schizosaccharomyces pombe (strain 972 / ATCC 24843) (Fission yeast).